The following is a 310-amino-acid chain: Putative S-adenosyl-L-methionine-dependent methyltransferase Franean1_4929 (310 aa).

The interval 1–28 is disordered; the sequence is MSRPSAPRGRTELRSIHERGHERGSAGV. Basic and acidic residues predominate over residues 9–24; the sequence is GRTELRSIHERGHERG. Residues D136 and 165 to 166 each bind S-adenosyl-L-methionine; that span reads DL.

Belongs to the UPF0677 family.

Functionally, exhibits S-adenosyl-L-methionine-dependent methyltransferase activity. This Parafrankia sp. (strain EAN1pec) protein is Putative S-adenosyl-L-methionine-dependent methyltransferase Franean1_4929.